The following is a 226-amino-acid chain: Endonuclease V (226 aa).

Residues Asp-43 and Asp-109 each coordinate Mg(2+).

It belongs to the endonuclease V family. Requires Mg(2+) as cofactor.

It localises to the cytoplasm. It carries out the reaction Endonucleolytic cleavage at apurinic or apyrimidinic sites to products with a 5'-phosphate.. Functionally, DNA repair enzyme involved in the repair of deaminated bases. Selectively cleaves double-stranded DNA at the second phosphodiester bond 3' to a deoxyinosine leaving behind the intact lesion on the nicked DNA. The protein is Endonuclease V of Kosmotoga olearia (strain ATCC BAA-1733 / DSM 21960 / TBF 19.5.1).